Consider the following 62-residue polypeptide: MKVKEIRELTTAEMLDKEKQLKEELFNLRFQLATGQLENTARIKEVRQSIARIKTVLREQAN.

Belongs to the universal ribosomal protein uL29 family.

The chain is Large ribosomal subunit protein uL29 from Enterococcus faecalis (strain ATCC 700802 / V583).